The following is a 798-amino-acid chain: MEIDKFVKEEDIPFEYGVVRERDNAVSWSRYLATKRSAGDELNLDWLYERCLKEIKDDWHLWKEFLKWRIELLNDCDIFRHKDEYNKISLLFEQCLTSCGKVGDAWIMYMEWVIQFKDLKRIRELLGKALRSMSWEYHEAIWRVVIDFIINELLIDNKRYELSLEDSIYYFVHGEHSTNFDTDLWSSSILQRYSLICDDIEPLLIYIFKTHDWSTIVRVFEKHLSPNLKPSQTSLFELYVSYITSMILVDNSAGVAAVVDQCIELFPFKKGELKTYLIFNLIRQGKITEAELYLEKVISETKDIIEFSVLYDFWIRMEELLTQELIQKMKDDNSEKQRLFANIRLHADTLTSLIKNHTIRLNDLELRREPNNIKLWLERVKLFDTISDKAKVYADAVLTVDYRLQTTPGLLGELWCQYCRLFEEDIEKSEVLLDKATNVPFKFLVDLENVWLYWCEYRLKRSIDDAIKVLSVVLEIPDNHELLLQKFEKGESPAQAAIFSSKRLWAMYLDLLEVKGNYGTAVNAYETAILIKAATPAMFINYALLNESSGHQAEALAVFERSVEIFPPSVSKSIWDIYLDVALKADITKEQKRDIFESAIKLAASGVACVSFFEKYSDFELNLGFHERSVEILHKGAKNISDLESKCTLWEECINRSEKQLDVNHTRKLYEECIETLPNSKAIKFLLPFAILEESRNEVARCRALLDYGSKLLKPAQNEELWDFWRNFETMHGTKDSFKNMLKARRFLEDTMKVNTEEVSRHADSIEFRASTAKISGSGPPSAEDKGYSNTAEIDLGL.

12 HAT repeats span residues 5 to 37 (KFVKEEDIPFEYGVVRERDNAVSWSRYLATKRS), 39 to 71 (GDELNLDWLYERCLKEIKDDWHLWKEFLKWRIE), 83 to 115 (DEYNKISLLFEQCLTSCGKVGDAWIMYMEWVIQ), 117 to 151 (KDLKRIRELLGKALRSMSWEYHEAIWRVVIDFIIN), 392 to 424 (VYADAVLTVDYRLQTTPGLLGELWCQYCRLFEE), 428 to 460 (KSEVLLDKATNVPFKFLVDLENVWLYWCEYRLK), 478 to 514 (DNHELLLQKFEKGESPAQAAIFSSKRLWAMYLDLLEV), 516 to 548 (GNYGTAVNAYETAILIKAATPAMFINYALLNES), 550 to 584 (GHQAEALAVFERSVEIFPPSVSKSIWDIYLDVALK), 587 to 622 (ITKEQKRDIFESAIKLAASGVACVSFFEKYSDFELN), 661 to 695 (LDVNHTRKLYEECIETLPNSKAIKFLLPFAILEES), and 697 to 731 (NEVARCRALLDYGSKLLKPAQNEELWDFWRNFETM).

It belongs to the crooked-neck family. Associated with the spliceosome.

It localises to the nucleus. Functionally, involved in pre-mRNA splicing and cell cycle progression. The sequence is that of Pre-mRNA-splicing factor SYF1 (SYF1) from Kluyveromyces lactis (strain ATCC 8585 / CBS 2359 / DSM 70799 / NBRC 1267 / NRRL Y-1140 / WM37) (Yeast).